Consider the following 41-residue polypeptide: Competence-stimulating peptide type 2 (41 aa).

Residues 1–24 (MKNTVKLEQFVALKEKDLQKIKGG) constitute a propeptide that is removed on maturation.

The protein belongs to the ComC family.

It is found in the secreted. Its function is as follows. Acts as a pheromone, induces cells to develop competence for genetic transformation. The sequence is that of Competence-stimulating peptide type 2 (comC2) from Streptococcus pneumoniae serotype 4 (strain ATCC BAA-334 / TIGR4).